Here is an 80-residue protein sequence, read N- to C-terminus: Conotoxin Cl10.1 (80 aa).

The N-terminal stretch at 1–20 (MTTLGMTMLVLLLLLPLATC) is a signal peptide. A propeptide spanning residues 21–36 (LGDGERSPWDSLLRAL) is cleaved from the precursor.

In terms of processing, contains 4 disulfide bonds. As to expression, expressed by the venom duct.

It is found in the secreted. This is Conotoxin Cl10.1 from Californiconus californicus (California cone).